The chain runs to 86 residues: Putative sodium channel toxin Ts17 (86 aa).

The signal sequence occupies residues 1 to 19 (MNYFIFLVVACLLTAGTEG). The LCN-type CS-alpha/beta domain occupies 21–82 (KDGYPVEGDN…EPTKTSGRCK (62 aa)). Disulfide bonds link cysteine 31-cysteine 81, cysteine 35-cysteine 57, cysteine 43-cysteine 64, and cysteine 47-cysteine 66. Residue proline 83 is modified to Proline amide.

The protein belongs to the long (4 C-C) scorpion toxin superfamily. Sodium channel inhibitor family. Alpha subfamily. As to expression, expressed by the venom gland.

It is found in the secreted. Alpha toxins bind voltage-independently at site-3 of sodium channels (Nav) and inhibit the inactivation of the activated channels, thereby blocking neuronal transmission. The sequence is that of Putative sodium channel toxin Ts17 from Tityus serrulatus (Brazilian scorpion).